Reading from the N-terminus, the 90-residue chain is Putative ATPase inhibitor, mitochondrial (90 aa).

Residues 42–89 (ESREKAKEDFFVHQHEIEQLRKLKESLKLHREELDELESRVDKKMKSN) are a coiled coil.

This sequence belongs to the ATPase inhibitor family.

The protein resides in the mitochondrion. In terms of biological role, forms a one-to-one complex with ATPase to inhibit the enzyme activity completely. This Schizosaccharomyces pombe (strain 972 / ATCC 24843) (Fission yeast) protein is Putative ATPase inhibitor, mitochondrial (inh1).